The chain runs to 551 residues: Monocarboxylic acid transporter (551 aa).

A run of 13 helical transmembrane segments spans residues 18-38 (NPIL…TVVL), 63-83 (GLAI…VGAI), 90-110 (GFLY…LVAE), 144-164 (VTLF…SVLL), 171-191 (WQAV…LLGG), 203-223 (AVLL…KVSG), 267-287 (LDFI…PHVL), 307-327 (IVLI…AAAL), 355-375 (IFMA…VAGL), 411-431 (VVIG…NVAF), 432-452 (LVAL…LYSL), 463-483 (VAAI…SPAV), and 503-523 (NPGL…TLVG).

This sequence belongs to the sodium:solute symporter (SSF) (TC 2.A.21) family.

It is found in the cell membrane. In terms of biological role, acts as a secondary carrier for acetate, propionate and pyruvate. Has high affinity for acetate and propionate and lower affinity for pyruvate. Driven by the electrochemical proton potential. The protein is Monocarboxylic acid transporter of Corynebacterium glutamicum (strain ATCC 13032 / DSM 20300 / JCM 1318 / BCRC 11384 / CCUG 27702 / LMG 3730 / NBRC 12168 / NCIMB 10025 / NRRL B-2784 / 534).